A 539-amino-acid chain; its full sequence is Glucose-6-phosphate isomerase (539 aa).

Residue Glu353 is the Proton donor of the active site. Catalysis depends on residues His384 and Lys505.

The protein belongs to the GPI family.

Its subcellular location is the cytoplasm. The enzyme catalyses alpha-D-glucose 6-phosphate = beta-D-fructose 6-phosphate. It functions in the pathway carbohydrate biosynthesis; gluconeogenesis. Its pathway is carbohydrate degradation; glycolysis; D-glyceraldehyde 3-phosphate and glycerone phosphate from D-glucose: step 2/4. Its function is as follows. Catalyzes the reversible isomerization of glucose-6-phosphate to fructose-6-phosphate. The polypeptide is Glucose-6-phosphate isomerase (Ralstonia nicotianae (strain ATCC BAA-1114 / GMI1000) (Ralstonia solanacearum)).